The primary structure comprises 590 residues: Asparagine synthetase [glutamine-hydrolyzing] (590 aa).

The active-site For GATase activity is the Cys2. The 184-residue stretch at 2-185 folds into the Glutamine amidotransferase type-2 domain; sequence CGILAVLGCS…PGNLYSSRSG (184 aa). Residues 50-54, 75-77, and Asp98 contribute to the L-glutamine site; these read RLAII and NGE. One can recognise an Asparagine synthetase domain in the interval 193–516; that stretch reads PQWYNETIPS…PQNSARFTVP (324 aa). ATP contacts are provided by residues Leu231, Val267, and 341 to 342; that span reads SG.

It catalyses the reaction L-aspartate + L-glutamine + ATP + H2O = L-asparagine + L-glutamate + AMP + diphosphate + H(+). Its pathway is amino-acid biosynthesis; L-asparagine biosynthesis; L-asparagine from L-aspartate (L-Gln route): step 1/1. This chain is Asparagine synthetase [glutamine-hydrolyzing], found in Asparagus officinalis (Garden asparagus).